The chain runs to 318 residues: Ribosomal RNA small subunit methyltransferase H (318 aa).

Residues 35–37 (GGH), aspartate 54, phenylalanine 83, aspartate 104, and glutamine 111 each bind S-adenosyl-L-methionine.

It belongs to the methyltransferase superfamily. RsmH family.

The protein localises to the cytoplasm. The enzyme catalyses cytidine(1402) in 16S rRNA + S-adenosyl-L-methionine = N(4)-methylcytidine(1402) in 16S rRNA + S-adenosyl-L-homocysteine + H(+). Specifically methylates the N4 position of cytidine in position 1402 (C1402) of 16S rRNA. The sequence is that of Ribosomal RNA small subunit methyltransferase H from Latilactobacillus sakei subsp. sakei (strain 23K) (Lactobacillus sakei subsp. sakei).